The primary structure comprises 335 residues: Biotin synthase (335 aa).

One can recognise a Radical SAM core domain in the interval 47 to 276 (FYGKKVKLNM…SKEIRISGGR (230 aa)). Cys65, Cys69, and Cys72 together coordinate [4Fe-4S] cluster. [2Fe-2S] cluster-binding residues include Cys109, Cys141, Cys201, and Arg271.

This sequence belongs to the radical SAM superfamily. Biotin synthase family. In terms of assembly, homodimer. The cofactor is [4Fe-4S] cluster. [2Fe-2S] cluster is required as a cofactor.

It carries out the reaction (4R,5S)-dethiobiotin + (sulfur carrier)-SH + 2 reduced [2Fe-2S]-[ferredoxin] + 2 S-adenosyl-L-methionine = (sulfur carrier)-H + biotin + 2 5'-deoxyadenosine + 2 L-methionine + 2 oxidized [2Fe-2S]-[ferredoxin]. The protein operates within cofactor biosynthesis; biotin biosynthesis; biotin from 7,8-diaminononanoate: step 2/2. Its function is as follows. Catalyzes the conversion of dethiobiotin (DTB) to biotin by the insertion of a sulfur atom into dethiobiotin via a radical-based mechanism. In Bacillus subtilis subsp. natto, this protein is Biotin synthase.